The primary structure comprises 1379 residues: DNA-directed RNA polymerase subunit beta (1379 aa).

The protein belongs to the RNA polymerase beta chain family. As to quaternary structure, the RNAP catalytic core consists of 2 alpha, 1 beta, 1 beta' and 1 omega subunit. When a sigma factor is associated with the core the holoenzyme is formed, which can initiate transcription.

It catalyses the reaction RNA(n) + a ribonucleoside 5'-triphosphate = RNA(n+1) + diphosphate. DNA-dependent RNA polymerase catalyzes the transcription of DNA into RNA using the four ribonucleoside triphosphates as substrates. This chain is DNA-directed RNA polymerase subunit beta, found in Allorhizobium ampelinum (strain ATCC BAA-846 / DSM 112012 / S4) (Agrobacterium vitis (strain S4)).